Here is a 135-residue protein sequence, read N- to C-terminus: ATP synthase epsilon chain 1 (135 aa).

Belongs to the ATPase epsilon chain family. F-type ATPases have 2 components, CF(1) - the catalytic core - and CF(0) - the membrane proton channel. CF(1) has five subunits: alpha(3), beta(3), gamma(1), delta(1), epsilon(1). CF(0) has three main subunits: a, b and c.

Its subcellular location is the cell inner membrane. Functionally, produces ATP from ADP in the presence of a proton gradient across the membrane. This is ATP synthase epsilon chain 1 from Nitrobacter hamburgensis (strain DSM 10229 / NCIMB 13809 / X14).